A 435-amino-acid polypeptide reads, in one-letter code: MASSVLSECGFRPLPRFYPKHTTSFASNPKPTFKFNPPLKPPSSLLNSRYGFYSKTRNWALNVATPLTTLQSPSEEDTERFDPGAPPPFNLADIRAAIPKHCWVKNPWMSMSYVVRDVAIVFGLAAVAAYFNNWLLWPLYWFAQGTMFWALFVLGHDCGHGSFSNDPRLNSVAGHLLHSSILVPYHGWRISHRTHHQNHGHVENDESWHPLPESIYKNLEKTTQMFRFTLPFPMLAYPFYLWNRSPGKQGSHYHPDSDLFLPKEKKDVLTSTACWTAMAALLVCLNFVMGPIQMLKLYGIPYWIFVMWLDFVTYLHHHGHEDKLPWYRGKEWSYLRGGLTTLDRDYGWINNIHHDIGTHVIHHLFPQIPHYHLVEATEAAKPVLGKYYREPKNSGPLPLHLLGSLIKSMKQDHFVSDTGDVVYYEADPKLNGQRT.

The N-terminal 42 residues, 1–42 (MASSVLSECGFRPLPRFYPKHTTSFASNPKPTFKFNPPLKPP), are a transit peptide targeting the chloroplast. Helical transmembrane passes span 111–131 (MSYVVRDVAIVFGLAAVAAYF) and 134–154 (WLLWPLYWFAQGTMFWALFVL). The short motif at 156–160 (HDCGH) is the Histidine box-1 element. A Histidine box-2 motif is present at residues 192 to 196 (HRTHH). 2 helical membrane passes run 268-290 (VLTSTACWTAMAALLVCLNFVMG) and 297-319 (LYGIPYWIFVMWLDFVTYLHHHG). A Histidine box-3 motif is present at residues 359–363 (HVIHH).

The protein belongs to the fatty acid desaturase type 1 family.

The protein localises to the plastid. Its subcellular location is the chloroplast membrane. The catalysed reaction is a (7Z,10Z)-hexadecadienoyl-containing glycerolipid + 2 reduced [2Fe-2S]-[ferredoxin] + O2 + 2 H(+) = a (7Z,10Z,13Z)-hexadecatrienoyl-containing glycerolipid + 2 oxidized [2Fe-2S]-[ferredoxin] + 2 H2O. It catalyses the reaction a (9Z,12Z)-octadecadienoyl-containing glycerolipid + 2 reduced [2Fe-2S]-[ferredoxin] + O2 + 2 H(+) = (9Z,12Z,15Z)-octadecatrienoyl-containing glycerolipid + 2 oxidized [2Fe-2S]-[ferredoxin] + 2 H2O. Its pathway is lipid metabolism; polyunsaturated fatty acid biosynthesis. Functionally, chloroplast omega-3 fatty acid desaturase introduces the third double bond in the biosynthesis of 16:3 and 18:3 fatty acids, important constituents of plant membranes. It is thought to use ferredoxin as an electron donor and to act on fatty acids esterified to galactolipids, sulfolipids and phosphatidylglycerol. The sequence is that of Temperature-sensitive sn-2 acyl-lipid omega-3 desaturase (ferredoxin), chloroplastic from Arabidopsis thaliana (Mouse-ear cress).